The primary structure comprises 175 residues: Large ribosomal subunit protein uL10 (175 aa).

The protein belongs to the universal ribosomal protein uL10 family. Part of the ribosomal stalk of the 50S ribosomal subunit. The N-terminus interacts with L11 and the large rRNA to form the base of the stalk. The C-terminus forms an elongated spine to which L12 dimers bind in a sequential fashion forming a multimeric L10(L12)X complex.

Forms part of the ribosomal stalk, playing a central role in the interaction of the ribosome with GTP-bound translation factors. The chain is Large ribosomal subunit protein uL10 from Pelotomaculum thermopropionicum (strain DSM 13744 / JCM 10971 / SI).